Consider the following 188-residue polypeptide: MFKGILLCVLFAVLSANPLSQPEGFADEERDVRGLASFLGKALKAGLKIGAHLLGGAPQQREANDERRFADDDDDVNERDVRGFASFLGKALKAALKIGANMLGGTPQQREANDERRFADDEDDVNERDVRGFGSFLGKALKAALKIGANALGGSPQQREANDERRFADGQQDYTGWMDFGRRNGEDD.

A signal peptide spans Met-1–Ala-26. The propeptide occupies Asp-27–Gly-170. Residues Leu-152 to Asp-188 are disordered. The residue at position 174 (Tyr-174) is a Sulfotyrosine. Position 180 is a phenylalanine amide (Phe-180). A propeptide spanning residues Asn-184–Asp-188 is cleaved from the precursor.

It belongs to the gastrin/cholecystokinin family. Expressed by the skin glands.

The protein localises to the secreted. Its function is as follows. The pharmacological activities of caerulein are quite similar to the physiological activities of gastrin and related peptides. The sequence is that of Preprocaerulein type-1 from Xenopus laevis (African clawed frog).